The chain runs to 291 residues: N-acetylmannosamine kinase (291 aa).

ATP contacts are provided by residues 5–12 and 132–139; these read AIDIGGTK and GVGGGVVS. Zn(2+) is bound by residues histidine 156, cysteine 166, cysteine 168, and cysteine 173.

The protein belongs to the ROK (NagC/XylR) family. NanK subfamily. Homodimer.

The catalysed reaction is an N-acyl-D-mannosamine + ATP = an N-acyl-D-mannosamine 6-phosphate + ADP + H(+). Its pathway is amino-sugar metabolism; N-acetylneuraminate degradation; D-fructose 6-phosphate from N-acetylneuraminate: step 2/5. Functionally, catalyzes the phosphorylation of N-acetylmannosamine (ManNAc) to ManNAc-6-P. This chain is N-acetylmannosamine kinase, found in Escherichia coli O6:K15:H31 (strain 536 / UPEC).